The sequence spans 397 residues: tRNA-specific 2-thiouridylase MnmA (397 aa).

ATP is bound by residues 19–26 (AMSGGVDS) and Leu-45. The Nucleophile role is filled by Cys-113. Cys-113 and Cys-210 are joined by a disulfide. Gly-137 provides a ligand contact to ATP. Residues 160–162 (RDQ) are interaction with tRNA. Cys-210 serves as the catalytic Cysteine persulfide intermediate.

Belongs to the MnmA/TRMU family.

The protein localises to the cytoplasm. It catalyses the reaction S-sulfanyl-L-cysteinyl-[protein] + uridine(34) in tRNA + AH2 + ATP = 2-thiouridine(34) in tRNA + L-cysteinyl-[protein] + A + AMP + diphosphate + H(+). Its function is as follows. Catalyzes the 2-thiolation of uridine at the wobble position (U34) of tRNA, leading to the formation of s(2)U34. In Rhodopseudomonas palustris (strain ATCC BAA-98 / CGA009), this protein is tRNA-specific 2-thiouridylase MnmA.